Here is an 82-residue protein sequence, read N- to C-terminus: Putative antitoxin VapB23 (82 aa).

Putative antitoxin component of a possible type II toxin-antitoxin (TA) system. The cognate toxin is VapC23. This Mycobacterium tuberculosis (strain ATCC 25618 / H37Rv) protein is Putative antitoxin VapB23 (vapB23).